A 572-amino-acid polypeptide reads, in one-letter code: Sialate:O-sulfotransferase 2 (572 aa).

Residues 1–18 (MARSLLKIHRYFRRKPVR) lie on the Cytoplasmic side of the membrane. The helical; Signal-anchor for type II membrane protein transmembrane segment at 19-39 (FFSFILLYLTAGSLVFLHSGF) threads the bilayer. Topologically, residues 40 to 572 (SSDSSTAGIA…SGVPDEYRPR (533 aa)) are extracellular. WSC domains follow at residues 134-226 (RAKY…YRLE) and 237-331 (SAIF…YQTQ). N-linked (GlcNAc...) asparagine glycosylation is found at asparagine 196, asparagine 249, asparagine 262, and asparagine 561.

This sequence belongs to the WSCD family.

It localises to the golgi apparatus membrane. Functionally, sialate:O-sulfotransferase which catalyzes 8-O-sulfation at the Sia-glycan level using 3'-phosphoadenosine 5'-phosphosulfate (PAPS) as a donor, forming 8-O-sulfated Sia (Sia8S)-glycans. The chain is Sialate:O-sulfotransferase 2 (wscd2) from Danio rerio (Zebrafish).